The primary structure comprises 200 residues: Sec-independent protein translocase protein TatB (200 aa).

Residues leucine 2–glycine 22 form a helical membrane-spanning segment. Positions lysine 160–serine 200 are disordered. Residues glycine 191–serine 200 are compositionally biased toward polar residues.

Belongs to the TatB family. As to quaternary structure, the Tat system comprises two distinct complexes: a TatABC complex, containing multiple copies of TatA, TatB and TatC subunits, and a separate TatA complex, containing only TatA subunits. Substrates initially bind to the TatABC complex, which probably triggers association of the separate TatA complex to form the active translocon.

The protein resides in the cell inner membrane. In terms of biological role, part of the twin-arginine translocation (Tat) system that transports large folded proteins containing a characteristic twin-arginine motif in their signal peptide across membranes. Together with TatC, TatB is part of a receptor directly interacting with Tat signal peptides. TatB may form an oligomeric binding site that transiently accommodates folded Tat precursor proteins before their translocation. The sequence is that of Sec-independent protein translocase protein TatB from Caulobacter vibrioides (strain ATCC 19089 / CIP 103742 / CB 15) (Caulobacter crescentus).